The following is a 173-amino-acid chain: Alpha-crystallin A chain (173 aa).

M1 bears the N-acetylmethionine mark. Positions 1–63 are required for complex formation with BFSP1 and BFSP2; it reads MDIAIQQPWF…RTVLDSGVSE (63 aa). The residue at position 6 (Q6) is a Deamidated glutamine; partial. Position 45 is a phosphoserine (S45). Residue Q50 is modified to Deamidated glutamine; partial. The sHSP domain occupies 52 to 162; it reads LFRTVLDSGV…GHSERAIPVS (111 aa). K70 and K99 each carry N6-acetyllysine. Position 100 (H100) interacts with Zn(2+). N101 bears the Deamidated asparagine; partial mark. Zn(2+) is bound by residues E102 and H107. S122 carries the post-translational modification Phosphoserine. N123 carries the deamidated asparagine; partial modification. The tract at residues 144–173 is disordered; the sequence is PKVPSGVDAGHSERAIPVSREEKPSSAPSS. A compositionally biased stretch (basic and acidic residues) spans 153–167; sequence GHSERAIPVSREEKP. Zn(2+) is bound at residue H154. The O-linked (GlcNAc) serine glycan is linked to S162.

Belongs to the small heat shock protein (HSP20) family. In terms of assembly, heteromer composed of three CRYAA and one CRYAB subunits. Inter-subunit bridging via zinc ions enhances stability, which is crucial as there is no protein turn over in the lens. Can also form homodimers and homotetramers (dimers of dimers) which serve as the building blocks of homooligomers. Within homooligomers, the zinc-binding motif is created from residues of 3 different molecules. His-100 and Glu-102 from one molecule are ligands of the zinc ion, and His-107 and His-154 residues from additional molecules complete the site with tetrahedral coordination geometry. Part of a complex required for lens intermediate filament formation composed of BFSP1, BFSP2 and CRYAA. Acetylation at Lys-70 may increase chaperone activity. Post-translationally, undergoes age-dependent proteolytical cleavage at the C-terminus.

It localises to the cytoplasm. It is found in the nucleus. Contributes to the transparency and refractive index of the lens. Acts as a chaperone, preventing aggregation of various proteins under a wide range of stress conditions. Required for the correct formation of lens intermediate filaments as part of a complex composed of BFSP1, BFSP2 and CRYAA. This is Alpha-crystallin A chain (CRYAA) from Neovison vison (American mink).